The following is a 657-amino-acid chain: Glycogen debranching enzyme (657 aa).

Residue D336 is the Nucleophile of the active site. The active-site Proton donor is the E371. Positions 460–479 (ANGEENRDGTNNNYSNNHGK) are disordered.

It belongs to the glycosyl hydrolase 13 family.

It carries out the reaction Hydrolysis of (1-&gt;6)-alpha-D-glucosidic linkages to branches with degrees of polymerization of three or four glucose residues in limit dextrin.. The protein operates within glycan degradation; glycogen degradation. Its function is as follows. Removes maltotriose and maltotetraose chains that are attached by 1,6-alpha-linkage to the limit dextrin main chain, generating a debranched limit dextrin. The polypeptide is Glycogen debranching enzyme (Escherichia coli O127:H6 (strain E2348/69 / EPEC)).